The sequence spans 90 residues: Small ribosomal subunit protein bS20 (90 aa).

Belongs to the bacterial ribosomal protein bS20 family.

In terms of biological role, binds directly to 16S ribosomal RNA. The polypeptide is Small ribosomal subunit protein bS20 (Rickettsia canadensis (strain McKiel)).